The sequence spans 122 residues: MKKVNKKTVGSVGEKIAAQYLSKKGYKILEKNFKCKIGEIDLIALYKNQIVFVEVKTRTSVNFGLPSEAVDFHKQQKIVKIAQVYIASSNFKQYQPRFDIIEVYLNPEKLTLEKVNHILNAF.

It belongs to the UPF0102 family.

The protein is UPF0102 protein TTE1452 of Caldanaerobacter subterraneus subsp. tengcongensis (strain DSM 15242 / JCM 11007 / NBRC 100824 / MB4) (Thermoanaerobacter tengcongensis).